A 498-amino-acid polypeptide reads, in one-letter code: Ammonium transporter 3 member 1 (498 aa).

Transmembrane regions (helical) follow at residues 33 to 53 (ISATLVGMQSVPGLVILYGSI), 58 to 78 (WAVNSAFMALYAFAAVWLCWV), 143 to 163 (MVYFQCVFAAITLILLAGSLL), 171 to 191 (WMLFVPLWLTFSYTVGAFSLW), 206 to 226 (GGYVIHLSSGVAGFTAAYWVG), 241 to 261 (VLLMLTGAGILWMGWAGFNGG), 276 to 296 (NTNICAATSLLVWTCLDVIFF), 301 to 321 (VIGAVQGMITGLVCITPGAGL), 325 to 345 (WAAIVMGILSGSIPWFTMMVV), 369 to 389 (GFLGGATTGLFAEPVLCSLFL), and 412 to 432 (VAGALFIICWNVVVTSLVCLA). A disordered region spans residues 478 to 498 (DNNDTHHNNNKAAPSGVTQNV). Positions 487–498 (NKAAPSGVTQNV) are enriched in polar residues.

Belongs to the ammonia transporter channel (TC 1.A.11.2) family. In terms of tissue distribution, expressed in root.

It localises to the membrane. Functionally, involved in ammonium transport. This is Ammonium transporter 3 member 1 (AMT3-1) from Oryza sativa subsp. japonica (Rice).